We begin with the raw amino-acid sequence, 547 residues long: MEDSEALGFEHMGLDPRLLQAVTDLGWSRPTLIQEKAIPLALEGKDLLARARTGSGKTAAYAIPMLQLLLHRKATGPVVEQAVRGLVLVPTKELARQAQSMIQQLATYCARDVRVANVSAAEDSVSQRAVLMEKPDVVVGTPSRILSHLQQDSLKLRDSLELLVVDEADLLFSFGFEEELKSLLCHLPRIYQAFLMSATFNEDVQALKELILHNPVTLKLQESQLPGPDQLQQFQVVCETEEDKFLLLYALLKLSLIRGKSLLFVNTLERSYRLRLFLEQFSIPTCVLNGELPLRSRCHIISQFNQGFYDCVIATDAEVLGAPVKGKRRGRGPKGDKASDPEAGVARGIDFHHVSAVLNFDLPPTPEAYIHRAGRTARANNPGIVLTFVLPTEQFHLGKIEELLSGENRGPILLPYQFRMEEIEGFRYRCRDAMRSVTKQAIREARLKEIKEELLHSEKLKTYFEDNPRDLQLLRHDLPLHPAVVKPHLGHVPDYLVPPALRGLVRPHKKRKKLSSSCRKAKRAKSQNPLRSFKHKGKKFRPTAKPS.

The Q motif signature appears at 7–35; sequence LGFEHMGLDPRLLQAVTDLGWSRPTLIQE. Residues 38–218 enclose the Helicase ATP-binding domain; it reads IPLALEGKDL…ELILHNPVTL (181 aa). 51-58 contacts ATP; it reads ARTGSGKT. Phosphoserine is present on S126. A Phosphothreonine modification is found at T141. The DEAD box signature appears at 166-169; it reads DEAD. Residues 230–424 enclose the Helicase C-terminal domain; it reads QLQQFQVVCE…PYQFRMEEIE (195 aa). 2 stretches are compositionally biased toward basic residues: residues 506-525 and 532-547; these read RPHK…KRAK and SFKH…AKPS. Residues 506-547 are disordered; the sequence is RPHKKRKKLSSSCRKAKRAKSQNPLRSFKHKGKKFRPTAKPS. S532 carries the phosphoserine modification.

It belongs to the DEAD box helicase family. DDX56/DBP9 subfamily. May form homooligomeric complexes. Interacts with IRF3. Interacts with OCT4 and POU5F1. In terms of assembly, (Microbial infection) Interacts with West Nile virus capsid protein C. As to quaternary structure, (Microbial infection) Interacts with foot-and-mouth disease virus protein 3A; this interaction leads to inhibition of type I interferon production. (Microbial infection) Interacts with EMCV protein 3C; this interaction leads to inhibition of type I interferon production. In terms of tissue distribution, detected in heart, brain, liver, pancreas, placenta and lung.

The protein resides in the nucleus. It localises to the nucleolus. It carries out the reaction ATP + H2O = ADP + phosphate + H(+). Nucleolar RNA helicase that plays a role in various biological processes including innate immunity, ribosome biogenesis or nucleolus organization. Plays an essential role in maintaining nucleolar integrity in planarian stem cells. Maintains embryonic stem cells proliferation by conventional regulation of ribosome assembly and interaction with OCT4 and POU5F1 complex. Regulates antiviral innate immunity by inhibiting the virus-triggered signaling nuclear translocation of IRF3. Mechanistically, acts by disrupting the interaction between IRF3 and importin IPO5. May play a role in later stages of the processing of the pre-ribosomal particles leading to mature 60S ribosomal subunits. Has intrinsic ATPase activity. In terms of biological role, (Microbial infection) Helicase activity is important for packaging viral RNA into virions during West Nile virus infection. Its function is as follows. (Microbial infection) Plays a positive role in foot-and-mouth disease virus replication by inhibiting the phosphorylation of IRF3 leading to inhibition of type I interferon. Functionally, (Microbial infection) Plays a positive role in EMCV replication by interrupting IRF3 phosphorylation and its nucleus translocation. This is Probable ATP-dependent RNA helicase DDX56 (DDX56) from Homo sapiens (Human).